Consider the following 251-residue polypeptide: uncharacterized protein (251 aa).

An HTH deoR-type domain is found at 3–58; sequence TPERHQLIIDQIEKHDVVKIQELINLTNASESTIRRDLSTLEERGFLKRVHGGAAK. Residues 20–39 constitute a DNA-binding region (H-T-H motif); it reads VKIQELINLTNASESTIRRD.

This is an uncharacterized protein from Bacillus subtilis (strain 168).